Consider the following 845-residue polypeptide: MSENNNDKITVKRTLTLKRSVLETSTVKQNFSHGRTKAVVVETKRRKITRTDEKAETPQPITKPHVAPQRSRPRFEDAKPNEPTAKSNLSSAEIEARLRALEEAHIQERIIREQAEEEARRAKEREESLRQTIQKTEIDETPQEEEEPTLQTQTPSLSPAQSQIEPINIPITPKNTTVIEKRKADETKEDDRNSRRTNLAKSEVRAPKVLKGADEKRRGKITLNSALDEEGSARGRSMAAMRRRQEKFKRAQNQEPKEKISREVILPETITIQELAQRMTERSVDVIKFLMKQGQMMKPGDVIDADVAELIAVEFGHTVKRVLESDVEEGIFNIADNPQKMQLRPPVVTIMGHVDHGKTSLLDAIRKANVVSGEAGGITQHIGAYQVEKNGQKITFIDTPGHAAFTAMRARGARVTDIAVLVVAADDSVMPQTIESINHAKAAGVPIIVAINKIDKPTANAQKVRTELLHHEVFVETMGGETLEVEVSAKTGQNLDKLLEAILLQAEILDLKADPQRTAEGVVIEAKLDRGRGSVATVLVQKGTLHPSDIIVAGNEWGRVRALIDDHGRHVKEAVPSTPIEILGMQGTPQAGDRFAVVTHEAKAREIAEYRQRLARDKAVARQTGSRGSLEQMMSKLQTTGVKEFPLIIKGDVQGSIEAIASALEKLGNEEVRARIVHSAAGGITESDISLAEASHSAVIGFNVRANKQARDCAKTQGIEIRYYNIIYDLVDDIKAAMSGLRSPEQRETFLGNAEILEVFNITKIGKVAGCLVTEGKIERGAGVRLIRDNIVIHEGKLKTLKRFKDEVNEVQSGQECGIAFENYEDIRTGDIIETFHIEHINRTL.

2 disordered regions span residues 44–91 (KRRK…NLSS) and 119–256 (ARRA…NQEP). Residues 119–129 (ARRAKEREESL) show a composition bias toward basic and acidic residues. A compositionally biased stretch (acidic residues) spans 139–148 (DETPQEEEEP). The segment covering 156–165 (SLSPAQSQIE) has biased composition (polar residues). 2 stretches are compositionally biased toward basic and acidic residues: residues 179-194 (IEKR…DRNS) and 202-217 (SEVR…DEKR). One can recognise a tr-type G domain in the interval 343 to 510 (LRPPVVTIMG…AILLQAEILD (168 aa)). Residues 352-359 (GHVDHGKT) form a G1 region. GTP is bound at residue 352–359 (GHVDHGKT). The G2 stretch occupies residues 377–381 (GITQH). The tract at residues 398 to 401 (DTPG) is G3. GTP is bound by residues 398 to 402 (DTPGH) and 452 to 455 (NKID). The segment at 452 to 455 (NKID) is G4. The segment at 488 to 490 (SAK) is G5.

This sequence belongs to the TRAFAC class translation factor GTPase superfamily. Classic translation factor GTPase family. IF-2 subfamily.

It is found in the cytoplasm. One of the essential components for the initiation of protein synthesis. Protects formylmethionyl-tRNA from spontaneous hydrolysis and promotes its binding to the 30S ribosomal subunits. Also involved in the hydrolysis of GTP during the formation of the 70S ribosomal complex. This chain is Translation initiation factor IF-2, found in Bartonella henselae (strain ATCC 49882 / DSM 28221 / CCUG 30454 / Houston 1) (Rochalimaea henselae).